The sequence spans 295 residues: Bifunctional protein FolD (295 aa).

NADP(+)-binding positions include 166–168, Ser-195, and Ile-236; that span reads GRS.

The protein belongs to the tetrahydrofolate dehydrogenase/cyclohydrolase family. As to quaternary structure, homodimer.

The enzyme catalyses (6R)-5,10-methylene-5,6,7,8-tetrahydrofolate + NADP(+) = (6R)-5,10-methenyltetrahydrofolate + NADPH. The catalysed reaction is (6R)-5,10-methenyltetrahydrofolate + H2O = (6R)-10-formyltetrahydrofolate + H(+). It participates in one-carbon metabolism; tetrahydrofolate interconversion. In terms of biological role, catalyzes the oxidation of 5,10-methylenetetrahydrofolate to 5,10-methenyltetrahydrofolate and then the hydrolysis of 5,10-methenyltetrahydrofolate to 10-formyltetrahydrofolate. In Chlorobium chlorochromatii (strain CaD3), this protein is Bifunctional protein FolD.